The following is a 436-amino-acid chain: MEECDYINELPDSLLTQILLDLRTKDSVKTSVSSKRWRNLWLNVPGLDLFSLQFTNPHHEEGLIKFMDRFMESNCRSRLQKFMIRYFECNGYRDRFMELIGTVVDCGIQHLYVYMHTCNRVDFIRQNIYKSKTLVSLKLYNVELKNPDFVVSLPCLKILKLMKICYGEDGPLVVEKLISGCPVLEDLELIKPFDILTQDVILFLRVSSQTLKSLRLYFATNGSVEIDAPRLKYMTFYESRFDRIMVKNMSSLFSIEIRAKSSFEYGGLLKAEDPRKRAIICDFLTVISSVRHMIISGSILEELHSYSKLGWIPQFRNLYHLQASFFGTSLQLLPTFLESCPNLKNLIMDYGAFKEENIDFHEVPQCLISTLEYVHINKLMMMEQSGIKLVNYFIENSAVLKKLTLRFSFFSSIESESYKKLLTSTKLSPTCQVIFV.

The F-box domain maps to Cys-4–Phe-50. LRR repeat units lie at residues Ile-287 to Gly-310 and Ser-397 to Lys-420. The 53-residue stretch at Glu-355–Phe-407 folds into the FBD domain.

This Arabidopsis thaliana (Mouse-ear cress) protein is Putative F-box/FBD/LRR-repeat protein At5g44960.